A 332-amino-acid polypeptide reads, in one-letter code: 2,3-diketo-L-gulonate reductase (332 aa).

His-44 (proton donor) is an active-site residue. NAD(+)-binding positions include 168–174 (ITMVDMS), 224–225 (WK), and 304–306 (GHE).

The protein belongs to the LDH2/MDH2 oxidoreductase family. DlgD subfamily. As to quaternary structure, homodimer.

It localises to the cytoplasm. The enzyme catalyses 3-dehydro-L-gulonate + NAD(+) = 2,3-dioxo-L-gulonate + NADH + H(+). It catalyses the reaction 3-dehydro-L-gulonate + NADP(+) = 2,3-dioxo-L-gulonate + NADPH + H(+). Catalyzes the reduction of 2,3-diketo-L-gulonate in the presence of NADH, to form 3-keto-L-gulonate. The polypeptide is 2,3-diketo-L-gulonate reductase (Escherichia fergusonii (strain ATCC 35469 / DSM 13698 / CCUG 18766 / IAM 14443 / JCM 21226 / LMG 7866 / NBRC 102419 / NCTC 12128 / CDC 0568-73)).